The following is a 214-amino-acid chain: uncharacterized protein (214 aa).

The AMMECR1 domain occupies 1–194; that stretch reads MVSANREMAV…MHYSEYLSYV (194 aa).

This is an uncharacterized protein from Arabidopsis thaliana (Mouse-ear cress).